We begin with the raw amino-acid sequence, 746 residues long: Transcription factor pbcR (746 aa).

Positions 1–12 (MYPWSSTGTSPF) are enriched in polar residues. Residues 1–40 (MYPWSSTGTSPFSHPDNEGAESGDMSMGEEQQQPHQRRQK) are disordered. Residues 47 to 76 (CQSCRASKVRCDQPNPGMPCLRCQKSGKPC) constitute a DNA-binding region (zn(2)-C6 fungal-type). Residues 109 to 131 (ELQDSAGDGETAHSTALRSPSQL) form a disordered region. Over residues 120–131 (AHSTALRSPSQL) the composition is skewed to polar residues.

The protein resides in the nucleus. In terms of biological role, transcription factor; part of the gene cluster that mediates the biosynthesis of the diterpene ent-pimara-8(14),15-diene (PD). Acts as a positive regulator for the cluster gene. Down-regulates the expression of the penicillin gene cluster, two putative polyketide clusters, and one putative nonribosomal peptide cluster. In Emericella nidulans (strain FGSC A4 / ATCC 38163 / CBS 112.46 / NRRL 194 / M139) (Aspergillus nidulans), this protein is Transcription factor pbcR.